The following is a 185-amino-acid chain: Ribosome-recycling factor (185 aa).

It belongs to the RRF family.

The protein resides in the cytoplasm. In terms of biological role, responsible for the release of ribosomes from messenger RNA at the termination of protein biosynthesis. May increase the efficiency of translation by recycling ribosomes from one round of translation to another. The chain is Ribosome-recycling factor from Roseiflexus castenholzii (strain DSM 13941 / HLO8).